A 263-amino-acid polypeptide reads, in one-letter code: Taurine import ATP-binding protein TauB (263 aa).

An ABC transporter domain is found at 4–235; that stretch reads LTAEAISLSF…RYAAGETVRS (232 aa). 40-47 serves as a coordination point for ATP; sequence GPSGCGKS.

This sequence belongs to the ABC transporter superfamily. Taurine importer (TC 3.A.1.17.1) family. The complex is composed of two ATP-binding proteins (TauB), two transmembrane proteins (TauC) and a solute-binding protein (TauA).

It localises to the cell inner membrane. It carries out the reaction taurine(out) + ATP + H2O = taurine(in) + ADP + phosphate + H(+). In terms of biological role, part of the ABC transporter complex TauABC involved in taurine import. Responsible for energy coupling to the transport system. This chain is Taurine import ATP-binding protein TauB, found in Pseudomonas aeruginosa (strain UCBPP-PA14).